The sequence spans 318 residues: Ferredoxin--NADP reductase (318 aa).

Residues Asp-33, Gln-41, Tyr-46, Val-84, Phe-115, Asp-276, and Thr-316 each coordinate FAD.

This sequence belongs to the ferredoxin--NADP reductase type 2 family. Homodimer. FAD serves as cofactor.

It carries out the reaction 2 reduced [2Fe-2S]-[ferredoxin] + NADP(+) + H(+) = 2 oxidized [2Fe-2S]-[ferredoxin] + NADPH. This is Ferredoxin--NADP reductase from Lactobacillus johnsonii (strain CNCM I-12250 / La1 / NCC 533).